The following is a 340-amino-acid chain: Glyceraldehyde-3-phosphate dehydrogenase (340 aa).

NAD(+) contacts are provided by residues 13-14 (TI) and glycine 112. 141-143 (SCN) serves as a coordination point for D-glyceraldehyde 3-phosphate. The active-site Nucleophile is the cysteine 142. Residue arginine 170 participates in NAD(+) binding. Residue 196–197 (HG) coordinates D-glyceraldehyde 3-phosphate. An NAD(+)-binding site is contributed by glutamine 302.

The protein belongs to the glyceraldehyde-3-phosphate dehydrogenase family. In terms of assembly, homotetramer.

It is found in the cytoplasm. It catalyses the reaction D-glyceraldehyde 3-phosphate + phosphate + NADP(+) = (2R)-3-phospho-glyceroyl phosphate + NADPH + H(+). The catalysed reaction is D-glyceraldehyde 3-phosphate + phosphate + NAD(+) = (2R)-3-phospho-glyceroyl phosphate + NADH + H(+). It functions in the pathway carbohydrate degradation; glycolysis; pyruvate from D-glyceraldehyde 3-phosphate: step 1/5. The protein is Glyceraldehyde-3-phosphate dehydrogenase (gap) of Archaeoglobus fulgidus (strain ATCC 49558 / DSM 4304 / JCM 9628 / NBRC 100126 / VC-16).